Consider the following 69-residue polypeptide: Sec-independent protein translocase protein TatA (69 aa).

Residues 1-21 (MMPGPFELIIILVIVLLLFGG) traverse the membrane as a helical segment.

This sequence belongs to the TatA/E family. As to quaternary structure, the Tat system comprises two distinct complexes: a TatABC complex, containing multiple copies of TatA, TatB and TatC subunits, and a separate TatA complex, containing only TatA subunits. Substrates initially bind to the TatABC complex, which probably triggers association of the separate TatA complex to form the active translocon.

The protein localises to the cell inner membrane. Part of the twin-arginine translocation (Tat) system that transports large folded proteins containing a characteristic twin-arginine motif in their signal peptide across membranes. TatA could form the protein-conducting channel of the Tat system. This Vesicomyosocius okutanii subsp. Calyptogena okutanii (strain HA) protein is Sec-independent protein translocase protein TatA.